The primary structure comprises 376 residues: Mitogen-activated protein kinase 5 (376 aa).

A Protein kinase domain is found at 43-329 (VPPIRPIGRG…VEEALCYPYL (287 aa)). Residues 49-57 (IGRGAYGFV) and Lys72 each bind ATP. Asp169 acts as the Proton acceptor in catalysis. Position 201 is a phosphothreonine (Thr201). Residues 201–203 (TEY) carry the TXY motif. A Phosphotyrosine modification is found at Tyr203. Thr206 is modified (phosphothreonine).

This sequence belongs to the protein kinase superfamily. CMGC Ser/Thr protein kinase family. MAP kinase subfamily. In terms of processing, autophosphorylated on threonine and tyrosine residues. Post-translationally, dually phosphorylated on Thr-201 and Tyr-203, which activates the enzyme.

The catalysed reaction is L-seryl-[protein] + ATP = O-phospho-L-seryl-[protein] + ADP + H(+). The enzyme catalyses L-threonyl-[protein] + ATP = O-phospho-L-threonyl-[protein] + ADP + H(+). With respect to regulation, activated by threonine and tyrosine phosphorylation. Activated by the MAP kinase kinase MKK2. Activated by the MAP kinase kinase MKK6 in vitro. The sequence is that of Mitogen-activated protein kinase 5 (MPK5) from Arabidopsis thaliana (Mouse-ear cress).